Reading from the N-terminus, the 182-residue chain is ATP-dependent protease subunit HslV (182 aa).

The active site involves T7. Residues G162, C165, and T168 each coordinate Na(+).

Belongs to the peptidase T1B family. HslV subfamily. As to quaternary structure, a double ring-shaped homohexamer of HslV is capped on each side by a ring-shaped HslU homohexamer. The assembly of the HslU/HslV complex is dependent on binding of ATP.

The protein resides in the cytoplasm. The enzyme catalyses ATP-dependent cleavage of peptide bonds with broad specificity.. Its activity is regulated as follows. Allosterically activated by HslU binding. Functionally, protease subunit of a proteasome-like degradation complex believed to be a general protein degrading machinery. The polypeptide is ATP-dependent protease subunit HslV (Legionella pneumophila (strain Lens)).